A 73-amino-acid polypeptide reads, in one-letter code: Biotin/lipoyl attachment protein (73 aa).

One can recognise a Biotinyl-binding domain in the interval 2 to 69 (TVSIQMAGNL…NEGDVLLELS (68 aa)). Lys-35 is subject to N6-biotinyllysine; alternate. An N6-lipoyllysine; alternate modification is found at Lys-35.

Can be both biotinylated and lipoylated on Lys-35 upon overexpression in E.coli depending on the growth medium; the nature of the modification in situ in B.subtilis is unknown.

The chain is Biotin/lipoyl attachment protein (yngHB) from Bacillus subtilis (strain 168).